The chain runs to 93 residues: uncharacterized protein (93 aa).

A coiled-coil region spans residues 36–69; it reads SEERLLSRLFEEMDELREAVEKEDWENLRDELLD.

This is an uncharacterized protein from Archaeoglobus fulgidus (strain ATCC 49558 / DSM 4304 / JCM 9628 / NBRC 100126 / VC-16).